Here is a 197-residue protein sequence, read N- to C-terminus: Ion-translocating oxidoreductase complex subunit B (197 aa).

The interval 1 to 26 (MSTILIAIIALAVLAAVFGAILGFAS) is hydrophobic. One can recognise a 4Fe-4S domain in the interval 32-90 (EADPIVDQIDTILPQTQCGQCGYPGCRPYAEAIANGDKINKCPPGGQATIEKLADLMGV). [4Fe-4S] cluster-binding residues include Cys49, Cys52, Cys57, Cys73, Cys114, Cys117, Cys120, Cys124, Cys144, Cys147, Cys150, and Cys154. 4Fe-4S ferredoxin-type domains follow at residues 105-134 (TVAFIHEDMCIGCTKCIQACPVDAIVGGTK) and 135-164 (ALHTVIKDECTGCDLCVAPCPTDCIEMIPV).

It belongs to the 4Fe4S bacterial-type ferredoxin family. RnfB subfamily. As to quaternary structure, the complex is composed of six subunits: RnfA, RnfB, RnfC, RnfD, RnfE and RnfG. It depends on [4Fe-4S] cluster as a cofactor.

The protein localises to the cell inner membrane. Functionally, part of a membrane-bound complex that couples electron transfer with translocation of ions across the membrane. The sequence is that of Ion-translocating oxidoreductase complex subunit B from Vibrio atlanticus (strain LGP32) (Vibrio splendidus (strain Mel32)).